Reading from the N-terminus, the 72-residue chain is Translational regulator CsrA (72 aa).

This sequence belongs to the CsrA/RsmA family. As to quaternary structure, homodimer; the beta-strands of each monomer intercalate to form a hydrophobic core, while the alpha-helices form wings that extend away from the core.

It is found in the cytoplasm. A translational regulator that binds mRNA to regulate translation initiation and/or mRNA stability. Usually binds in the 5'-UTR at or near the Shine-Dalgarno sequence preventing ribosome-binding, thus repressing translation. Its main target seems to be the major flagellin gene, while its function is anatagonized by FliW. This chain is Translational regulator CsrA, found in Clostridium botulinum (strain 657 / Type Ba4).